The sequence spans 302 residues: D-alanine--D-alanine ligase (302 aa).

One can recognise an ATP-grasp domain in the interval 100-294 (KALFRREGLL…FPELVEKLIQ (195 aa)). 127–180 (GLNYPIFVKSNIGGSSVNVHLVTNYEELFIAMEALFNAGEEVLLEEAIIGQEVT) contacts ATP. Mg(2+) contacts are provided by aspartate 248, glutamate 261, and asparagine 263.

This sequence belongs to the D-alanine--D-alanine ligase family. Requires Mg(2+) as cofactor. Mn(2+) serves as cofactor.

Its subcellular location is the cytoplasm. The enzyme catalyses 2 D-alanine + ATP = D-alanyl-D-alanine + ADP + phosphate + H(+). Its pathway is cell wall biogenesis; peptidoglycan biosynthesis. Functionally, cell wall formation. In Lawsonia intracellularis (strain PHE/MN1-00), this protein is D-alanine--D-alanine ligase.